A 310-amino-acid polypeptide reads, in one-letter code: HPr kinase/phosphorylase (310 aa).

Catalysis depends on residues H138 and K159. Position 153-160 (153-160 (GDSGIGKS)) interacts with ATP. Position 160 (S160) interacts with Mg(2+). D177 serves as the catalytic Proton acceptor; for phosphorylation activity. Proton donor; for dephosphorylation activity. Residues 201–210 (LEIRGVGIID) are important for the catalytic mechanism of both phosphorylation and dephosphorylation. E202 serves as a coordination point for Mg(2+). Residue R243 is part of the active site. The interval 264 to 269 (PVKTGR) is important for the catalytic mechanism of dephosphorylation.

Belongs to the HPrK/P family. Homohexamer. The cofactor is Mg(2+).

The catalysed reaction is [HPr protein]-L-serine + ATP = [HPr protein]-O-phospho-L-serine + ADP + H(+). It carries out the reaction [HPr protein]-O-phospho-L-serine + phosphate + H(+) = [HPr protein]-L-serine + diphosphate. In terms of biological role, catalyzes the ATP- as well as the pyrophosphate-dependent phosphorylation of a specific serine residue in HPr, a phosphocarrier protein of the phosphoenolpyruvate-dependent sugar phosphotransferase system (PTS). HprK/P also catalyzes the pyrophosphate-producing, inorganic phosphate-dependent dephosphorylation (phosphorolysis) of seryl-phosphorylated HPr (P-Ser-HPr). The two antagonistic activities of HprK/P are regulated by several intracellular metabolites, which change their concentration in response to the absence or presence of rapidly metabolisable carbon sources (glucose, fructose, etc.) in the growth medium. Therefore, by controlling the phosphorylation state of HPr, HPrK/P is a sensor enzyme that plays a major role in the regulation of carbon metabolism and sugar transport: it mediates carbon catabolite repression (CCR), and regulates PTS-catalyzed carbohydrate uptake and inducer exclusion. The polypeptide is HPr kinase/phosphorylase (Streptococcus uberis (strain ATCC BAA-854 / 0140J)).